The chain runs to 98 residues: NADH-ubiquinone oxidoreductase chain 4L (98 aa).

A run of 3 helical transmembrane segments spans residues 1–21 (MSLV…GLLM), 29–49 (SLLC…IMIL), and 61–81 (IILL…LVMV).

Belongs to the complex I subunit 4L family. As to quaternary structure, core subunit of respiratory chain NADH dehydrogenase (Complex I) which is composed of 45 different subunits.

The protein resides in the mitochondrion inner membrane. The catalysed reaction is a ubiquinone + NADH + 5 H(+)(in) = a ubiquinol + NAD(+) + 4 H(+)(out). Its function is as follows. Core subunit of the mitochondrial membrane respiratory chain NADH dehydrogenase (Complex I) which catalyzes electron transfer from NADH through the respiratory chain, using ubiquinone as an electron acceptor. Part of the enzyme membrane arm which is embedded in the lipid bilayer and involved in proton translocation. In Mogera wogura (Japanese mole), this protein is NADH-ubiquinone oxidoreductase chain 4L (MT-ND4L).